Here is a 320-residue protein sequence, read N- to C-terminus: TYIDGDKGILLYRGYPIEQLAEKGDFLESCYLLLYGELPTQQEKNDFDRRIMQHTMVHEQFSRFFQGFRRDSHPMAVMVACLGAMSAFYHDSIDITDPQQRMIASIRLISKVPTLAAMAYKYSIGQAFVYPHNSLSYAANFLRMCFAVPCEEYQVNPVLTRAMDRIFILHADHEQNASTSTVRLAGSSGANPFACIAAGVACLWGPAHGGANEACLKMLKEIGSVKKIPEFIARAKDKNDPFRLMGFGHRVYKNYDPRAKIMQKTCHEVLKELNRQDDPLLDIAIELEHIALNDEYFIEKKLYPNVDFYSGITLKALGFP.

Catalysis depends on residues histidine 249 and aspartate 307.

This sequence belongs to the citrate synthase family.

It catalyses the reaction oxaloacetate + acetyl-CoA + H2O = citrate + CoA + H(+). It functions in the pathway carbohydrate metabolism; tricarboxylic acid cycle; isocitrate from oxaloacetate: step 1/2. The sequence is that of Citrate synthase (gltA) from Bartonella doshiae.